Here is a 417-residue protein sequence, read N- to C-terminus: Hydroxysqualene dehydroxylase (417 aa).

It belongs to the HpnE family.

It carries out the reaction squalene + FAD + H2O + H(+) = hydroxysqualene + FADH2. It functions in the pathway secondary metabolite biosynthesis; hopanoid biosynthesis. Its function is as follows. Involved in the biosynthesis of the hopanoid precursor squalene (SQ) from farnesyl diphosphate (FPP). Catalyzes the third (last) step, the reduction of hydroxysqualene (HSQ) to SQ. In Sinorhizobium fredii (strain NBRC 101917 / NGR234), this protein is Hydroxysqualene dehydroxylase.